The sequence spans 260 residues: Pyridoxine 5'-phosphate synthase (260 aa).

Residue Asn15 participates in 3-amino-2-oxopropyl phosphate binding. Residue 17 to 18 participates in 1-deoxy-D-xylulose 5-phosphate binding; it reads DH. Arg26 is a binding site for 3-amino-2-oxopropyl phosphate. The active-site Proton acceptor is His51. 1-deoxy-D-xylulose 5-phosphate-binding residues include Arg53 and His58. Residue Glu78 is the Proton acceptor of the active site. A 1-deoxy-D-xylulose 5-phosphate-binding site is contributed by Thr108. The active-site Proton donor is His199. Residues Gly200 and 221–222 each bind 3-amino-2-oxopropyl phosphate; that span reads GH.

Belongs to the PNP synthase family. Homooctamer; tetramer of dimers.

The protein localises to the cytoplasm. It carries out the reaction 3-amino-2-oxopropyl phosphate + 1-deoxy-D-xylulose 5-phosphate = pyridoxine 5'-phosphate + phosphate + 2 H2O + H(+). Its pathway is cofactor biosynthesis; pyridoxine 5'-phosphate biosynthesis; pyridoxine 5'-phosphate from D-erythrose 4-phosphate: step 5/5. Catalyzes the complicated ring closure reaction between the two acyclic compounds 1-deoxy-D-xylulose-5-phosphate (DXP) and 3-amino-2-oxopropyl phosphate (1-amino-acetone-3-phosphate or AAP) to form pyridoxine 5'-phosphate (PNP) and inorganic phosphate. This chain is Pyridoxine 5'-phosphate synthase, found in Cupriavidus metallidurans (strain ATCC 43123 / DSM 2839 / NBRC 102507 / CH34) (Ralstonia metallidurans).